Consider the following 385-residue polypeptide: Glucans biosynthesis protein C (385 aa).

10 consecutive transmembrane segments (helical) span residues 17–37, 60–80, 91–111, 137–157, 173–193, 212–232, 239–259, 274–294, 311–331, and 338–358; these read AWLM…SHTW, MLVF…RYPL, VGIP…IMLQ, ISHL…VWIF, KFSM…YAVI, FIVM…LAFI, LFTT…VAYL, TESV…FSFG, ASLF…AYIT, and WLGF…LYEI.

Belongs to the acyltransferase 3 family. OpgC subfamily.

Its subcellular location is the cell membrane. It participates in glycan metabolism; osmoregulated periplasmic glucan (OPG) biosynthesis. Functionally, necessary for the succinyl substitution of periplasmic glucans. Could catalyze the transfer of succinyl residues from the cytoplasmic side of the membrane to the nascent glucan backbones on the periplasmic side of the membrane. This Shigella boydii serotype 4 (strain Sb227) protein is Glucans biosynthesis protein C.